Consider the following 162-residue polypeptide: NADH-quinone oxidoreductase subunit I (162 aa).

4Fe-4S ferredoxin-type domains follow at residues 52 to 82 and 93 to 122; these read LRRY…IEAG and TRYD…EGPN. [4Fe-4S] cluster is bound by residues Cys62, Cys65, Cys68, Cys72, Cys102, Cys105, Cys108, and Cys112.

It belongs to the complex I 23 kDa subunit family. In terms of assembly, NDH-1 is composed of 14 different subunits. Subunits NuoA, H, J, K, L, M, N constitute the membrane sector of the complex. It depends on [4Fe-4S] cluster as a cofactor.

It localises to the cell inner membrane. The catalysed reaction is a quinone + NADH + 5 H(+)(in) = a quinol + NAD(+) + 4 H(+)(out). Its function is as follows. NDH-1 shuttles electrons from NADH, via FMN and iron-sulfur (Fe-S) centers, to quinones in the respiratory chain. The immediate electron acceptor for the enzyme in this species is believed to be ubiquinone. Couples the redox reaction to proton translocation (for every two electrons transferred, four hydrogen ions are translocated across the cytoplasmic membrane), and thus conserves the redox energy in a proton gradient. The chain is NADH-quinone oxidoreductase subunit I from Beijerinckia indica subsp. indica (strain ATCC 9039 / DSM 1715 / NCIMB 8712).